We begin with the raw amino-acid sequence, 308 residues long: Ribosomal RNA small subunit methyltransferase H (308 aa).

S-adenosyl-L-methionine-binding positions include 32-34 (GGH), aspartate 52, phenylalanine 78, aspartate 100, and glutamine 107.

The protein belongs to the methyltransferase superfamily. RsmH family.

It localises to the cytoplasm. The enzyme catalyses cytidine(1402) in 16S rRNA + S-adenosyl-L-methionine = N(4)-methylcytidine(1402) in 16S rRNA + S-adenosyl-L-homocysteine + H(+). In terms of biological role, specifically methylates the N4 position of cytidine in position 1402 (C1402) of 16S rRNA. The sequence is that of Ribosomal RNA small subunit methyltransferase H from Legionella pneumophila (strain Corby).